We begin with the raw amino-acid sequence, 846 residues long: Circadian locomoter output cycles protein kaput (846 aa).

The Nuclear localization signal motif lies at 32–47 (DKAKRVSRNKSEKKRR). A bHLH domain is found at 34 to 84 (AKRVSRNKSEKKRRDQFNVLIKELGSMLPGNARKMDKSTVLQKSIDFLRKH). Ser38 and Ser42 each carry phosphoserine. Lys67 is covalently cross-linked (Glycyl lysine isopeptide (Lys-Gly) (interchain with G-Cter in SUMO1)). 2 consecutive PAS domains span residues 107-177 (NEEF…LLES) and 262-332 (FIKE…MQYG). The region spanning 336-379 (SCYYRFLTKGQQWIWLQTHYYITYHQWNSRPEFIVCTHTVVSYA) is the PAC domain. Residues 371 to 845 (CTHTVVSYAE…SLPDPSKVQP (475 aa)) form an interaction with NR3C1 region. 2 disordered regions span residues 392-411 (EESL…SDNR) and 420-495 (ALER…SSLT). Position 408 is a phosphoserine (Ser408). At Ser427 the chain carries Phosphoserine; by GSK3-beta. The residue at position 431 (Ser431) is a Phosphoserine. Positions 447–463 (DPSSTPTKIPTDTSTPP) are enriched in polar residues. Residues 450 to 570 (STPTKIPTDT…QGLQMFLQQS (121 aa)) form an interaction with SIRT1 region. Thr451 and Thr461 each carry phosphothreonine; by CDK5. The segment covering 478–493 (SSFSSQSINSQSVGSS) has biased composition (low complexity). Residues 514 to 564 (FQFSAQLGAMQHLKDQLEQRTRMIEANIHRQQEELRKIQEQLQMVHGQGLQ) are implicated in the circadian rhythmicity. Low complexity-rich tracts occupy residues 624-637 (QQQT…QSQQ) and 644-654 (SQQTSLPSQTQ). Disordered regions lie at residues 624-654 (QQQT…SQTQ), 764-783 (EQQL…QPPQ), and 811-846 (STFP…VQPQ). The segment covering 811–829 (STFPQSHHQQHQSQQQQQL) has biased composition (low complexity). Residue Lys842 forms a Glycyl lysine isopeptide (Lys-Gly) (interchain with G-Cter in SUMO1) linkage.

In terms of assembly, component of the circadian clock oscillator which includes the CRY proteins, CLOCK or NPAS2, BMAL1 or BMAL2, CSNK1D and/or CSNK1E, TIMELESS and the PER proteins. Interacts with KMT2A; in a circadian manner. Forms a heterodimer with BMAL1. The CLOCK-BMAL1 heterodimer is required for E-box-dependent transactivation, for CLOCK nuclear translocation and degradation, and for phosphorylation of both CLOCK and BMAL1. Interacts with NR3C1 in a ligand-dependent fashion. Interacts with ESR1 and estrogen stimulates this interaction. Interacts with the complex p35/CDK5. Interacts with RELA/p65. Interacts with KAT2B, CREBBP, EP300. Interacts with ID1 and ID3. Interacts with ID2. Interacts with MTA1. Interacts with OGA. Interacts with SIRT1. Interacts with CIPC. Interacts with EZH2. Interacts with EIF4E, PIWIL1 and DDX4. Interacts with PER2 and CRY1 and the interaction with PER and CRY proteins requires translocation to the nucleus. Interacts with PER1 and CRY2. Interaction of the CLOCK-BMAL1 heterodimer with PER or CRY inhibits transcription activation. Interaction of the CLOCK-BMAL1 with CRY1 is independent of DNA but with PER2 is off DNA. The CLOCK-BMAL1 heterodimer interacts with GSK3B. Interacts with KDM5A. Interacts with MYBBP1A. Interacts with THRAP3. Interacts with MED1; this interaction requires the presence of THRAP3. Interacts with NCOA2. The CLOCK-BMAL1 heterodimer interacts with PASD1. Interacts with ASS1 and IMPDH2; in a circadian manner. Interacts with NDUFA9. Interacts with PIWIL2 (via PIWI domain). Interacts with HNF4A. In terms of processing, ubiquitinated, leading to its proteasomal degradation. Post-translationally, O-glycosylated; contains O-GlcNAc. O-glycosylation by OGT prevents protein degradation by inhibiting ubiquitination. It also stabilizes the CLOCK-BMAL1 heterodimer thereby increasing CLOCK-BMAL1-mediated transcriptional activation of PER1/2/3 and CRY1/2. Phosphorylation is dependent on the CLOCK-BMAL1 heterodimer formation. Phosphorylation enhances the transcriptional activity, alters the subcellular localization and decreases the stability of the heterodimer by promoting its degradation. Phosphorylation shows circadian variations in the liver. May be phosphorylated by CSNK1D and CKSN1E. In terms of processing, sumoylation enhances its transcriptional activity and interaction with ESR1, resulting in up-regulation of ESR1 activity. Estrogen stimulates sumoylation. Desumoylation by SENP1 negatively regulates its transcriptional activity. Sumoylation stimulates cell proliferation and increases the proportion of S phase cells in breast cancer cell lines. Post-translationally, undergoes lysosome-mediated degradation in a time-dependent manner in the liver. As to expression, hair follicles (at protein level). Expressed in all tissues examined including spleen, thymus, prostate, testis, ovary, small intestine, colon, leukocytes, heart, brain, placenta, lung, liver, skeletal muscle, kidney and pancreas. Highest levels in testis and skeletal muscle. Low levels in thymus, lung and liver. Expressed in all brain regions with highest levels in cerebellum. Highly expressed in the suprachiasmatic nucleus (SCN).

The protein localises to the nucleus. It is found in the cytoplasm. The protein resides in the cytosol. It carries out the reaction L-lysyl-[protein] + acetyl-CoA = N(6)-acetyl-L-lysyl-[protein] + CoA + H(+). With respect to regulation, there is conflicting data about the effect of NAD cofactors on activity. PubMed:11441146 suggests that the redox state of the cell can modulate the transcriptional activity of the CLOCK-BMAL1 heterodimer; NADH and NADPH enhance the DNA-binding activity of the heterodimer. PubMed:23229515 reports that NADH and NADPH have no significant effect on DNA-binding activity of the CLOCK-BMAL1 heterodimer. Transcriptional activator which forms a core component of the circadian clock. The circadian clock, an internal time-keeping system, regulates various physiological processes through the generation of approximately 24 hour circadian rhythms in gene expression, which are translated into rhythms in metabolism and behavior. It is derived from the Latin roots 'circa' (about) and 'diem' (day) and acts as an important regulator of a wide array of physiological functions including metabolism, sleep, body temperature, blood pressure, endocrine, immune, cardiovascular, and renal function. Consists of two major components: the central clock, residing in the suprachiasmatic nucleus (SCN) of the brain, and the peripheral clocks that are present in nearly every tissue and organ system. Both the central and peripheral clocks can be reset by environmental cues, also known as Zeitgebers (German for 'timegivers'). The predominant Zeitgeber for the central clock is light, which is sensed by retina and signals directly to the SCN. The central clock entrains the peripheral clocks through neuronal and hormonal signals, body temperature and feeding-related cues, aligning all clocks with the external light/dark cycle. Circadian rhythms allow an organism to achieve temporal homeostasis with its environment at the molecular level by regulating gene expression to create a peak of protein expression once every 24 hours to control when a particular physiological process is most active with respect to the solar day. Transcription and translation of core clock components (CLOCK, NPAS2, BMAL1, BMAL2, PER1, PER2, PER3, CRY1 and CRY2) plays a critical role in rhythm generation, whereas delays imposed by post-translational modifications (PTMs) are important for determining the period (tau) of the rhythms (tau refers to the period of a rhythm and is the length, in time, of one complete cycle). A diurnal rhythm is synchronized with the day/night cycle, while the ultradian and infradian rhythms have a period shorter and longer than 24 hours, respectively. Disruptions in the circadian rhythms contribute to the pathology of cardiovascular diseases, cancer, metabolic syndromes and aging. A transcription/translation feedback loop (TTFL) forms the core of the molecular circadian clock mechanism. Transcription factors, CLOCK or NPAS2 and BMAL1 or BMAL2, form the positive limb of the feedback loop, act in the form of a heterodimer and activate the transcription of core clock genes and clock-controlled genes (involved in key metabolic processes), harboring E-box elements (5'-CACGTG-3') within their promoters. The core clock genes: PER1/2/3 and CRY1/2 which are transcriptional repressors form the negative limb of the feedback loop and interact with the CLOCK|NPAS2-BMAL1|BMAL2 heterodimer inhibiting its activity and thereby negatively regulating their own expression. This heterodimer also activates nuclear receptors NR1D1/2 and RORA/B/G, which form a second feedback loop and which activate and repress BMAL1 transcription, respectively. Regulates the circadian expression of ICAM1, VCAM1, CCL2, THPO and MPL and also acts as an enhancer of the transactivation potential of NF-kappaB. Plays an important role in the homeostatic regulation of sleep. The CLOCK-BMAL1 heterodimer regulates the circadian expression of SERPINE1/PAI1, VWF, B3, CCRN4L/NOC, NAMPT, DBP, MYOD1, PPARGC1A, PPARGC1B, SIRT1, GYS2, F7, NGFR, GNRHR, BHLHE40/DEC1, ATF4, MTA1, KLF10 and also genes implicated in glucose and lipid metabolism. Promotes rhythmic chromatin opening, regulating the DNA accessibility of other transcription factors. The CLOCK-BMAL2 heterodimer activates the transcription of SERPINE1/PAI1 and BHLHE40/DEC1. The preferred binding motif for the CLOCK-BMAL1 heterodimer is 5'-CACGTGA-3', which contains a flanking adenine nucleotide at the 3-prime end of the canonical 6-nucleotide E-box sequence. CLOCK specifically binds to the half-site 5'-CAC-3', while BMAL1 binds to the half-site 5'-GTGA-3'. The CLOCK-BMAL1 heterodimer also recognizes the non-canonical E-box motifs 5'-AACGTGA-3' and 5'-CATGTGA-3'. CLOCK has an intrinsic acetyltransferase activity, which enables circadian chromatin remodeling by acetylating histones and nonhistone proteins, including its own partner BMAL1. Represses glucocorticoid receptor NR3C1/GR-induced transcriptional activity by reducing the association of NR3C1/GR to glucocorticoid response elements (GREs) via the acetylation of multiple lysine residues located in its hinge region. The acetyltransferase activity of CLOCK is as important as its transcription activity in circadian control. Acetylates metabolic enzymes IMPDH2 and NDUFA9 in a circadian manner. Facilitated by BMAL1, rhythmically interacts and acetylates argininosuccinate synthase 1 (ASS1) leading to enzymatic inhibition of ASS1 as well as the circadian oscillation of arginine biosynthesis and subsequent ureagenesis. Drives the circadian rhythm of blood pressure through transcriptional activation of ATP1B1. The protein is Circadian locomoter output cycles protein kaput (CLOCK) of Homo sapiens (Human).